A 168-amino-acid chain; its full sequence is MLWRGVMLYYLLAFVVILIDQWTKWLVVRYMELGESIPIIENVLYMTSHRNRGAAWGMLQGQFWLFYLITIVVVVGIVIYIQRLQPTQRLFGIALGLMLGGALGNFIDRIFRKEVVDFVHTYIFNYSFPIFNVADAALTIGVALMFIYTWTEEKQRKGMSDGANSTHD.

Transmembrane regions (helical) follow at residues Leu-8–Val-28, Gly-61–Ile-81, and Phe-91–Phe-111. Active-site residues include Asp-117 and Asp-135. Residues Phe-128–Tyr-148 traverse the membrane as a helical segment.

Belongs to the peptidase A8 family.

The protein resides in the cell membrane. It catalyses the reaction Release of signal peptides from bacterial membrane prolipoproteins. Hydrolyzes -Xaa-Yaa-Zaa-|-(S,diacylglyceryl)Cys-, in which Xaa is hydrophobic (preferably Leu), and Yaa (Ala or Ser) and Zaa (Gly or Ala) have small, neutral side chains.. Its pathway is protein modification; lipoprotein biosynthesis (signal peptide cleavage). Its function is as follows. This protein specifically catalyzes the removal of signal peptides from prolipoproteins. The protein is Lipoprotein signal peptidase of Anoxybacillus flavithermus (strain DSM 21510 / WK1).